Reading from the N-terminus, the 778-residue chain is Aerobic respiration control sensor protein ArcB (778 aa).

At 1–25 the chain is on the cytoplasmic side; that stretch reads MKQIRLLAQYYVDLMMKLGLVRFSM. Residues 26–46 form a helical membrane-spanning segment; sequence LLALALVVLAIVVQMAVTMVL. The Periplasmic portion of the chain corresponds to 47–57; sequence HGQVESIDVIR. A helical membrane pass occupies residues 58-78; it reads SIFFGLLITPWAVYFLSVVVE. The Cytoplasmic portion of the chain corresponds to 79–778; it reads QLEESRQRLS…KAWVAKATKK (700 aa). The region spanning 153–223 is the PAS domain; that stretch reads QSSFLRSFLD…ETDEKVFRHN (71 aa). Positions 226–278 constitute a PAC domain; the sequence is LTYEQWLDYPDGRKACFEIRKVPYYDRVGKRHGLMGFGRDITERKRYQDALER. The Histidine kinase domain maps to 289 to 507; sequence TISHELRTPL…TFTLTIHAPS (219 aa). H292 is modified (phosphohistidine; by autocatalysis). The region spanning 527-643 is the Response regulatory domain; it reads NVLLVEDIEL…ALTAMIKKFW (117 aa). D576 bears the 4-aspartylphosphate mark. The HPt domain maps to 678–771; sequence GPKLITDGLA…RHDVEVLKAW (94 aa). Residue H717 is modified to Phosphohistidine.

In terms of processing, activation requires a sequential transfer of a phosphate group from a His in the primary transmitter domain, to an Asp in the receiver domain and to a His in the secondary transmitter domain.

The protein resides in the cell inner membrane. It catalyses the reaction ATP + protein L-histidine = ADP + protein N-phospho-L-histidine.. In terms of biological role, member of the two-component regulatory system ArcB/ArcA. Sensor-regulator protein for anaerobic repression of the arc modulon. Activates ArcA via a four-step phosphorelay. ArcB can also dephosphorylate ArcA by a reverse phosphorelay involving His-717 and Asp-576. The protein is Aerobic respiration control sensor protein ArcB (arcB) of Escherichia coli (strain K12).